Reading from the N-terminus, the 298-residue chain is Protoheme IX farnesyltransferase (298 aa).

Helical transmembrane passes span 26–46 (IVILLLITGFAAMWVAAGGPP), 48–68 (LGLTVVTMIGLALSCGAANAI), 110–130 (FLVLLTVNLLTALLATAGLLF), 147–167 (IVIGGAAGAAPPLVGWAAVTG), 174–194 (VIMFLVVFLWTPPHFWALALF), 220–240 (ILLYSLLLIPSAALLYWTGTV), 243–263 (LYLWTSVVLGCAMVSASVGLL), and 276–296 (TYGWSLLYLFVIFLAMMLDVT).

Belongs to the UbiA prenyltransferase family. Protoheme IX farnesyltransferase subfamily. In terms of assembly, interacts with CtaA.

Its subcellular location is the cell membrane. The catalysed reaction is heme b + (2E,6E)-farnesyl diphosphate + H2O = Fe(II)-heme o + diphosphate. The protein operates within porphyrin-containing compound metabolism; heme O biosynthesis; heme O from protoheme: step 1/1. Functionally, converts heme B (protoheme IX) to heme O by substitution of the vinyl group on carbon 2 of heme B porphyrin ring with a hydroxyethyl farnesyl side group. The polypeptide is Protoheme IX farnesyltransferase (Symbiobacterium thermophilum (strain DSM 24528 / JCM 14929 / IAM 14863 / T)).